The primary structure comprises 278 residues: Large ribosomal subunit protein uL2 (278 aa).

3 disordered regions span residues 1–20, 25–57, and 224–278; these read MAIR…SVSD, TRST…RGGG, and VVMN…GKKR. 2 stretches are compositionally biased toward basic residues: residues 45–57 and 269–278; these read AHGR…RGGG and VRRRKTGKKR.

Belongs to the universal ribosomal protein uL2 family. As to quaternary structure, part of the 50S ribosomal subunit. Forms a bridge to the 30S subunit in the 70S ribosome.

Functionally, one of the primary rRNA binding proteins. Required for association of the 30S and 50S subunits to form the 70S ribosome, for tRNA binding and peptide bond formation. It has been suggested to have peptidyltransferase activity; this is somewhat controversial. Makes several contacts with the 16S rRNA in the 70S ribosome. The sequence is that of Large ribosomal subunit protein uL2 from Nocardia farcinica (strain IFM 10152).